The chain runs to 322 residues: ATP-dependent 6-phosphofructokinase (322 aa).

Gly11 is a binding site for ATP. 21-25 (RAVVR) is an ADP binding site. Residues 72-73 (RC) and 102-105 (GDGS) each bind ATP. Asp103 contributes to the Mg(2+) binding site. 127 to 129 (TID) is a binding site for substrate. Asp129 functions as the Proton acceptor in the catalytic mechanism. An ADP-binding site is contributed by Arg156. Residues Arg164 and 171 to 173 (MGR) contribute to the substrate site. Residues 187–189 (GAE), Arg213, and 215–217 (KKH) contribute to the ADP site. Substrate is bound by residues Glu224, Arg245, and 251–254 (HVQR).

The protein belongs to the phosphofructokinase type A (PFKA) family. ATP-dependent PFK group I subfamily. Prokaryotic clade 'B1' sub-subfamily. In terms of assembly, homotetramer. It depends on Mg(2+) as a cofactor.

The protein resides in the cytoplasm. The catalysed reaction is beta-D-fructose 6-phosphate + ATP = beta-D-fructose 1,6-bisphosphate + ADP + H(+). Its pathway is carbohydrate degradation; glycolysis; D-glyceraldehyde 3-phosphate and glycerone phosphate from D-glucose: step 3/4. Allosterically activated by ADP and other diphosphonucleosides, and allosterically inhibited by phosphoenolpyruvate. Catalyzes the phosphorylation of D-fructose 6-phosphate to fructose 1,6-bisphosphate by ATP, the first committing step of glycolysis. This Staphylococcus aureus (strain JH1) protein is ATP-dependent 6-phosphofructokinase.